Reading from the N-terminus, the 252-residue chain is Imidazole glycerol phosphate synthase subunit HisF (252 aa).

Residues D11 and D130 contribute to the active site.

Belongs to the HisA/HisF family. Heterodimer of HisH and HisF.

The protein localises to the cytoplasm. It carries out the reaction 5-[(5-phospho-1-deoxy-D-ribulos-1-ylimino)methylamino]-1-(5-phospho-beta-D-ribosyl)imidazole-4-carboxamide + L-glutamine = D-erythro-1-(imidazol-4-yl)glycerol 3-phosphate + 5-amino-1-(5-phospho-beta-D-ribosyl)imidazole-4-carboxamide + L-glutamate + H(+). The protein operates within amino-acid biosynthesis; L-histidine biosynthesis; L-histidine from 5-phospho-alpha-D-ribose 1-diphosphate: step 5/9. In terms of biological role, IGPS catalyzes the conversion of PRFAR and glutamine to IGP, AICAR and glutamate. The HisF subunit catalyzes the cyclization activity that produces IGP and AICAR from PRFAR using the ammonia provided by the HisH subunit. The sequence is that of Imidazole glycerol phosphate synthase subunit HisF from Azobacteroides pseudotrichonymphae genomovar. CFP2.